We begin with the raw amino-acid sequence, 310 residues long: MVKVYAPASSANMSVGFDVLGAAVTPVDGALLGDVVTVESAETFSLNNLGRFADKLPSEPRENIVYQCWERFCQELGKQIPVAMTLEKNMPIGSGLGSSACSVVAALMAMNEHCGKPLNDTRLLALMGELEGRISGSIHYDNVAPCFLGGMQLMIEENDIISQQVPGFDEWLWVLAYPGIKVSTAEARAILPAQYRRQDCIAHGRHLAGFIHACYSRQPELAAKLMKDVIAEPYRERLLPGFRQARQAVAEIGAVASGISGSGPTLFALCDKPDTAQRVADWLGKNYLQNQEGFVHICRLDTAGARVLEN.

91–101 (PIGSGLGSSAC) contacts ATP.

It belongs to the GHMP kinase family. Homoserine kinase subfamily.

The protein localises to the cytoplasm. It carries out the reaction L-homoserine + ATP = O-phospho-L-homoserine + ADP + H(+). The protein operates within amino-acid biosynthesis; L-threonine biosynthesis; L-threonine from L-aspartate: step 4/5. Its function is as follows. Catalyzes the ATP-dependent phosphorylation of L-homoserine to L-homoserine phosphate. The sequence is that of Homoserine kinase from Escherichia coli O157:H7.